The following is a 329-amino-acid chain: PTS-dependent dihydroxyacetone kinase 1, dihydroxyacetone-binding subunit DhaK (329 aa).

Residues 7–329 enclose the DhaK domain; it reads GTDQVVEQMV…LKLPVDTIAW (323 aa). Residues 53-56, K104, and D109 contribute to the dihydroxyacetone site; that span reads GSGH. H56 (proton acceptor) is an active-site residue. H218 serves as the catalytic Tele-hemiaminal-histidine intermediate.

As to quaternary structure, homodimer. The dihydroxyacetone kinase complex is composed of a homodimer of DhaM, a homodimer of DhaK and the subunit DhaL.

The protein resides in the cytoplasm. The catalysed reaction is dihydroxyacetone + phosphoenolpyruvate = dihydroxyacetone phosphate + pyruvate. The protein operates within polyol metabolism; glycerol degradation. Functionally, dihydroxyacetone binding subunit of the dihydroxyacetone kinase, which is responsible for the phosphoenolpyruvate (PEP)-dependent phosphorylation of dihydroxyacetone via a phosphoryl group transfer from DhaL-ATP. In Listeria innocua serovar 6a (strain ATCC BAA-680 / CLIP 11262), this protein is PTS-dependent dihydroxyacetone kinase 1, dihydroxyacetone-binding subunit DhaK.